The chain runs to 238 residues: Orotidine 5'-phosphate decarboxylase (238 aa).

Substrate contacts are provided by residues D10, K32, 59–68, T122, R184, Q193, G213, and R214; that span reads DLKLHDIPNT. The Proton donor role is filled by K61.

It belongs to the OMP decarboxylase family. Type 1 subfamily. As to quaternary structure, homodimer.

It catalyses the reaction orotidine 5'-phosphate + H(+) = UMP + CO2. It functions in the pathway pyrimidine metabolism; UMP biosynthesis via de novo pathway; UMP from orotate: step 2/2. Catalyzes the decarboxylation of orotidine 5'-monophosphate (OMP) to uridine 5'-monophosphate (UMP). In Bacillus anthracis (strain A0248), this protein is Orotidine 5'-phosphate decarboxylase.